The following is a 264-amino-acid chain: Sirohydrochlorin cobaltochelatase (264 aa).

Residues G45, I84, I85, D88, E89, and K92 each contribute to the Co-sirohydrochlorin site. The active-site Proton acceptor is the H145. Co(2+) contacts are provided by H145 and E175. Co-sirohydrochlorin-binding residues include L202, V203, and H207. Residue H207 participates in Co(2+) binding.

The protein belongs to the CbiK family. Homotrimer.

It carries out the reaction Co-sirohydrochlorin + 2 H(+) = sirohydrochlorin + Co(2+). The enzyme catalyses Co-precorrin-2 + 3 H(+) = precorrin-2 + Co(2+). The protein operates within cofactor biosynthesis; adenosylcobalamin biosynthesis; cob(II)yrinate a,c-diamide from sirohydrochlorin (anaerobic route): step 1/10. Its function is as follows. Cobalt chelatase responsible for the insertion of cobalt during anaerobic cobalamin biosynthesis. Can catalyze the insertion of Co(2+) into either sirohydrochlorin or precorrin-2. It is not clear which is the natural substrate in Salmonella. The chain is Sirohydrochlorin cobaltochelatase from Salmonella typhimurium (strain LT2 / SGSC1412 / ATCC 700720).